Consider the following 506-residue polypeptide: Galactose/methyl galactoside import ATP-binding protein MglA (506 aa).

2 consecutive ABC transporter domains span residues 14–249 and 264–506; these read LEMS…VGRS and VILE…SLHL. 46 to 53 contacts ATP; sequence GENGAGKS.

It belongs to the ABC transporter superfamily. Galactose/methyl galactoside importer (TC 3.A.1.2.3) family. In terms of assembly, the complex is composed of one ATP-binding protein (MglA), two transmembrane proteins (MglC) and a solute-binding protein (MglB).

It localises to the cell inner membrane. The enzyme catalyses D-galactose(out) + ATP + H2O = D-galactose(in) + ADP + phosphate + H(+). It carries out the reaction methyl beta-D-galactoside(out) + ATP + H2O = methyl beta-D-galactoside(in) + ADP + phosphate + H(+). Functionally, part of the ABC transporter complex MglABC involved in galactose/methyl galactoside import. Responsible for energy coupling to the transport system. This is Galactose/methyl galactoside import ATP-binding protein MglA from Escherichia coli O6:K15:H31 (strain 536 / UPEC).